A 166-amino-acid chain; its full sequence is Putative 4-hydroxy-4-methyl-2-oxoglutarate aldolase (166 aa).

Residues 81-84 (GDII) and Arg103 contribute to the substrate site. Asp104 provides a ligand contact to a divalent metal cation.

This sequence belongs to the class II aldolase/RraA-like family. As to quaternary structure, homotrimer. A divalent metal cation is required as a cofactor.

It catalyses the reaction 4-hydroxy-4-methyl-2-oxoglutarate = 2 pyruvate. The enzyme catalyses oxaloacetate + H(+) = pyruvate + CO2. Catalyzes the aldol cleavage of 4-hydroxy-4-methyl-2-oxoglutarate (HMG) into 2 molecules of pyruvate. Also contains a secondary oxaloacetate (OAA) decarboxylase activity due to the common pyruvate enolate transition state formed following C-C bond cleavage in the retro-aldol and decarboxylation reactions. The polypeptide is Putative 4-hydroxy-4-methyl-2-oxoglutarate aldolase (Corynebacterium glutamicum (strain ATCC 13032 / DSM 20300 / JCM 1318 / BCRC 11384 / CCUG 27702 / LMG 3730 / NBRC 12168 / NCIMB 10025 / NRRL B-2784 / 534)).